Here is a 309-residue protein sequence, read N- to C-terminus: Anamorsin (309 aa).

The tract at residues 6 to 172 (ISPGQLVAVF…KPNFEVGSSS (167 aa)) is N-terminal SAM-like domain. Positions 173–222 (QLKLLHKKSSSVKPVVDPATAKLWTLSANDMEDDSMDLIDSDELLDPEDL) are linker. Phosphoserine is present on residues Ser182, Ser183, and Ser213. The [2Fe-2S] cluster site is built by Cys235, Cys244, Cys247, and Cys249. Positions 235 to 249 (CGEGKKRKACKNCTC) are fe-S binding site A. Residue Ser269 is modified to Phosphoserine. Residues Cys271, Cys274, Cys282, and Cys285 each contribute to the [4Fe-4S] cluster site. Short sequence motifs (cx2C motif) lie at residues 271 to 274 (CGNC) and 282 to 285 (CANC). The fe-S binding site B stretch occupies residues 271 to 285 (CGNCYLGDAFRCANC). 2 positions are modified to phosphoserine: Ser302 and Ser304.

The protein belongs to the anamorsin family. As to quaternary structure, monomer. Interacts with NDOR1. Interacts with CHCHD4. The cofactor is [2Fe-2S] cluster. [4Fe-4S] cluster is required as a cofactor.

The protein localises to the cytoplasm. It localises to the nucleus. It is found in the mitochondrion intermembrane space. Functionally, component of the cytosolic iron-sulfur (Fe-S) protein assembly (CIA) machinery required for the maturation of extramitochondrial Fe-S proteins. Part of an electron transfer chain functioning in an early step of cytosolic Fe-S biogenesis, facilitating the de novo assembly of a [4Fe-4S] cluster on the scaffold complex NUBP1-NUBP2. Electrons are transferred to CIAPIN1 from NADPH via the FAD- and FMN-containing protein NDOR1. NDOR1-CIAPIN1 are also required for the assembly of the diferric tyrosyl radical cofactor of ribonucleotide reductase (RNR), probably by providing electrons for reduction during radical cofactor maturation in the catalytic small subunit. Has anti-apoptotic effects in the cell. Involved in negative control of cell death upon cytokine withdrawal. Promotes development of hematopoietic cells. This Rattus norvegicus (Rat) protein is Anamorsin.